The sequence spans 263 residues: uncharacterized protein (263 aa).

The tract at residues 198–224 (KRSSDSFVSLKPGEDEHSPLEISTCGN) is disordered.

This is an uncharacterized protein from Saccharomyces cerevisiae (strain ATCC 204508 / S288c) (Baker's yeast).